A 333-amino-acid polypeptide reads, in one-letter code: tRNA(Ile)-lysidine synthase (333 aa).

33-38 (SGGADS) provides a ligand contact to ATP.

The protein belongs to the tRNA(Ile)-lysidine synthase family.

The protein localises to the cytoplasm. It catalyses the reaction cytidine(34) in tRNA(Ile2) + L-lysine + ATP = lysidine(34) in tRNA(Ile2) + AMP + diphosphate + H(+). Functionally, ligates lysine onto the cytidine present at position 34 of the AUA codon-specific tRNA(Ile) that contains the anticodon CAU, in an ATP-dependent manner. Cytidine is converted to lysidine, thus changing the amino acid specificity of the tRNA from methionine to isoleucine. The sequence is that of tRNA(Ile)-lysidine synthase from Salinispora arenicola (strain CNS-205).